Consider the following 313-residue polypeptide: Olfactory receptor 4M1 (313 aa).

Residues 1–25 (METANYTKVTEFVLTGLSQTREVQL) lie on the Extracellular side of the membrane. An N-linked (GlcNAc...) asparagine glycan is attached at asparagine 5. The chain crosses the membrane as a helical span at residues 26–49 (VLFVIFLSFYLFILPGNILIICTI). Residues 50–57 (RLDPHLTS) lie on the Cytoplasmic side of the membrane. A helical transmembrane segment spans residues 58-79 (PMYFLLANLALLDIWYSSITAP). Over 80–100 (KMLIDFFVERKIISFGGCIAQ) the chain is Extracellular. Cysteine 97 and cysteine 189 are oxidised to a cystine. A helical membrane pass occupies residues 101 to 120 (LFFLHFVGASEMFLLTVMAY). Over 121–139 (DRYAAICRPLHYATIMNRR) the chain is Cytoplasmic. A helical transmembrane segment spans residues 140–158 (LCCILVALSWMGGFIHSII). The Extracellular portion of the chain corresponds to 159–195 (QVALIVRLPFCGPNELDSYFCDITQVVRIACANTFPE). A helical membrane pass occupies residues 196–219 (ELVMICSSGLISVVCFIALLMSYA). Over 220–237 (FLLALLKKHSGSGENTNR) the chain is Cytoplasmic. Residues 238–260 (AMSTCYSHITIVVLMFGPSIYIY) form a helical membrane-spanning segment. At 261–271 (ARPFDSFSLDK) the chain is on the extracellular side. Residues 272–291 (VVSVFHTVIFPLLNPIIYTL) form a helical membrane-spanning segment. Residues 292–313 (RNKEVKAAMRKVVTKYILCEEK) are Cytoplasmic-facing.

The protein belongs to the G-protein coupled receptor 1 family. As to expression, highly expressed in the testis and olfactory bulb.

It localises to the cell membrane. In terms of biological role, olfactory receptor that acts as a receptor of Asprosin hormone, potentially at the surface of hepatocytes and may help to promote hepatocyte glucose release. This is Olfactory receptor 4M1 from Homo sapiens (Human).